The sequence spans 462 residues: Nitrate/nitrite transporter NarU (462 aa).

Topologically, residues 1-35 are cytoplasmic; sequence MALQNEKNSRYLLRDWKPENPAFWENKGKHIARRN. A helical transmembrane segment spans residues 36-56; it reads LWISVSCLLLAFCVWMLFSAV. At 57–76 the chain is on the periplasmic side; it reads TVNLNKIGFNFTTDQLFLLT. A helical transmembrane segment spans residues 77–97; the sequence is ALPSVSGALLRVPYSFMVPIF. Residues 98-101 lie on the Cytoplasmic side of the membrane; that stretch reads GGRR. The chain crosses the membrane as a helical span at residues 102-122; sequence WTVFSTAILIIPCVWLGIAVQ. At 123–125 the chain is on the periplasmic side; it reads NPN. The chain crosses the membrane as a helical span at residues 126–146; sequence TPFGIFIVIALLCGFAGANFA. Topologically, residues 147-180 are cytoplasmic; that stretch reads SSMGNISFFFPKAKQGSALGINGGLGNLGVSVMQ. A helical transmembrane segment spans residues 181 to 201; the sequence is LVAPLVIFVPVFAFLGVNGVP. Over 202–206 the chain is Periplasmic; the sequence is QADGS. Residues 207-227 traverse the membrane as a helical segment; that stretch reads VMSLANAAWIWVPLLAIATIA. At 228-258 the chain is on the cytoplasmic side; it reads AWSGMNDIASSRASIADQLPVLQRLHLWLLS. Residues 259–279 traverse the membrane as a helical segment; it reads LLYLATFGSFIGFSAGFAMLA. The Periplasmic segment spans residues 280 to 287; it reads KTQFPDVN. A helical transmembrane segment spans residues 288 to 308; that stretch reads ILRLAFFGPFIGAIARSVGGA. Over 309 to 317 the chain is Cytoplasmic; sequence ISDKFGGVR. A helical membrane pass occupies residues 318 to 338; that stretch reads VTLINFIFMAIFSALLFLTLP. Residues 339–344 are Periplasmic-facing; the sequence is GTGSGN. The helical transmembrane segment at 345–365 threads the bilayer; that stretch reads FIAFYAVFMGLFLTAGLGSGS. At 366-401 the chain is on the cytoplasmic side; that stretch reads TFQMIAVIFRQITIYRVKMKGGSDEQAHKEAVTETA. Residues 402–422 traverse the membrane as a helical segment; that stretch reads AALGFISAIGAVGGFFIPQAF. At 423–432 the chain is on the periplasmic side; it reads GMSLNMTGSP. Residues 433 to 453 traverse the membrane as a helical segment; sequence VGAMKVFLIFYIVCVLLTWLV. Topologically, residues 454–462 are cytoplasmic; sequence YGRRKFSQK.

Belongs to the major facilitator superfamily. Nitrate/nitrite porter (TC 2.A.1.8) family.

The protein localises to the cell inner membrane. Functionally, catalyzes nitrate uptake, nitrite uptake and nitrite export across the cytoplasmic membrane. May function as a nitrate/H(+) and nitrite/H(+) channel. Could confer a selective advantage during severe nutrient starvation or slow growth. This is Nitrate/nitrite transporter NarU (narU) from Escherichia coli (strain K12).